Reading from the N-terminus, the 343-residue chain is MKQYSVGNQHSNYRSLLFPFLCSQMTQLTASGNQTMVTEFLFSMFPHAHRGGLLFFIPLLLIYGFILTGNLIMFIVIQVGMALHTPLYFFISVLSFLEICYTTTTIPKMLSCLISEQKSISVAGCLLQMYFFHSLGITESCVLTAMAIDRYIAICNPLRYPTIMIPKLCIQLTVGSCFCGFLLVLPEIAWISTLPFCGSNQIHQIFCDFTPVLSLACTDTFLVVIVDAIHAAEIVASFLVIALSYIRIIIVILGMHSAEGHHKAFSTCAAHLAVFLLFFGSVAVMYLRFSATYSVFWDTAIAVTFVILAPFFNPIIYSLKNKDMKEAIGRLFHYQKRAGWAGK.

Residues 1–53 lie on the Extracellular side of the membrane; that stretch reads MKQYSVGNQHSNYRSLLFPFLCSQMTQLTASGNQTMVTEFLFSMFPHAHRGGL. Asparagine 33 carries N-linked (GlcNAc...) asparagine glycosylation. The helical transmembrane segment at 54-74 threads the bilayer; the sequence is LFFIPLLLIYGFILTGNLIMF. Topologically, residues 75–82 are cytoplasmic; that stretch reads IVIQVGMA. A helical membrane pass occupies residues 83-103; it reads LHTPLYFFISVLSFLEICYTT. The Extracellular portion of the chain corresponds to 104–127; it reads TTIPKMLSCLISEQKSISVAGCLL. Cysteine 125 and cysteine 217 are oxidised to a cystine. Residues 128–148 traverse the membrane as a helical segment; that stretch reads QMYFFHSLGITESCVLTAMAI. Residues 149–167 lie on the Cytoplasmic side of the membrane; sequence DRYIAICNPLRYPTIMIPK. The chain crosses the membrane as a helical span at residues 168-188; sequence LCIQLTVGSCFCGFLLVLPEI. The Extracellular segment spans residues 189 to 224; sequence AWISTLPFCGSNQIHQIFCDFTPVLSLACTDTFLVV. A helical transmembrane segment spans residues 225 to 244; that stretch reads IVDAIHAAEIVASFLVIALS. Topologically, residues 245–264 are cytoplasmic; it reads YIRIIIVILGMHSAEGHHKA. Residues 265 to 285 form a helical membrane-spanning segment; the sequence is FSTCAAHLAVFLLFFGSVAVM. Residues 286 to 298 are Extracellular-facing; the sequence is YLRFSATYSVFWD. The chain crosses the membrane as a helical span at residues 299–319; that stretch reads TAIAVTFVILAPFFNPIIYSL. Residues 320-343 are Cytoplasmic-facing; that stretch reads KNKDMKEAIGRLFHYQKRAGWAGK.

This sequence belongs to the G-protein coupled receptor 1 family.

The protein resides in the cell membrane. Functionally, odorant receptor. This Homo sapiens (Human) protein is Olfactory receptor 6K6 (OR6K6).